The primary structure comprises 994 residues: Cation-chloride cotransporter 2 (994 aa).

The interval 1–28 (MERGGFGGAGRHDEEAPAMRPAPQQRYR) is disordered. Over 1 to 139 (MERGGFGGAG…GHPKETETKL (139 aa)) the chain is Cytoplasmic. The helical transmembrane segment at 140 to 160 (DTMMGVFVPCLQNILGIIYYI) threads the bilayer. The Extracellular portion of the chain corresponds to 161-174 (RFTWIVGMGGVWQS). The helical transmembrane segment at 175–195 (LVLVAFCGSCTFLTTISLSAI) threads the bilayer. Residues 196–221 (ATNGAMKGGGPYYLIGRALGPEVGVS) are Cytoplasmic-facing. The helical transmembrane segment at 222 to 242 (IGLCFFLGNAVAGAMYVLGAV) threads the bilayer. Over 243 to 287 (ETFLDAVPSAEFFQESVTVVTNTFVNGTAAGNATTISTPNLHDLQ) the chain is Extracellular. N-linked (GlcNAc...) asparagine glycans are attached at residues Asn268 and Asn274. The helical transmembrane segment at 288–308 (VYGIIVTILLCFIVFGGVKII) threads the bilayer. The Cytoplasmic portion of the chain corresponds to 309–311 (NKV). A helical membrane pass occupies residues 312–332 (APAFLIPVLFSILCIYIGVFI). The Extracellular segment spans residues 333 to 372 (APRPNASKWITGLSITTLKDNWSSDYQRTNNAGVPDPNGS). N-linked (GlcNAc...) asparagine glycans are attached at residues Asn337, Asn353, and Asn370. The helical transmembrane segment at 373–393 (IYWDFNALLGLYFPAVTGIMA) threads the bilayer. Residues 394–412 (GSNRSASLKDTQRSIPIGT) are Cytoplasmic-facing. Residues 413–433 (LHATISTTMMYLLSVFLFGAL) form a helical membrane-spanning segment. Residues 434-448 (STREGLLTDRLLCAA) lie on the Extracellular side of the membrane. A helical transmembrane segment spans residues 449 to 469 (VAWPSPAVVYAGIILSTLGAA). Residues 470 to 505 (LQSLTGAPRLLAAIANDDILPVLNYFKAYEGSEPHV) lie on the Cytoplasmic side of the membrane. Residues 506-526 (ATLFTSFICISCVIIGNLDVI) traverse the membrane as a helical segment. At 527-529 (TPT) the chain is on the extracellular side. The chain crosses the membrane as a helical span at residues 530–552 (ITMFFLLCYAGVNLSCFLLDLLD). Residues 553–558 (APSWRP) lie on the Cytoplasmic side of the membrane. Residues 559-579 (RWKLHHWSLSLIGALLCIVIM) form a helical membrane-spanning segment. The Extracellular portion of the chain corresponds to 580 to 585 (FMISWT). The helical transmembrane segment at 586 to 606 (FTVVSLALASLIYYYVSLKGK) threads the bilayer. The Cytoplasmic portion of the chain corresponds to 607 to 994 (AGDWGDGFKS…YRRDVVTLFT (388 aa)).

This sequence belongs to the SLC12A transporter family.

The protein resides in the membrane. In terms of biological role, probable cation/chloride cotransporter. This is Cation-chloride cotransporter 2 (CCC2) from Oryza sativa subsp. japonica (Rice).